We begin with the raw amino-acid sequence, 480 residues long: Protein DETOXIFICATION 15 (480 aa).

A run of 12 helical transmembrane segments spans residues 36–56, 69–89, 118–138, 143–163, 180–200, 208–228, 255–275, 294–314, 326–346, 360–380, 396–416, and 428–448; these read GPLI…VMFV, IATS…ASAM, LLSV…VFFG, IAHL…AYGL, VVIC…VLVL, GAAV…SCYV, LVIP…ELLV, VWMI…NELG, RVVL…LILI, VVSH…LDSF, IGAF…GLLL, and WLGI…ITFF.

It belongs to the multi antimicrobial extrusion (MATE) (TC 2.A.66.1) family.

The protein resides in the membrane. This is Protein DETOXIFICATION 15 from Arabidopsis thaliana (Mouse-ear cress).